The chain runs to 109 residues: Cell division protein ZapA (109 aa).

Positions 21-99 form a coiled coil; sequence PDQRDALNQA…IEQALLEQGR (79 aa).

It belongs to the ZapA family. Type 1 subfamily. Homodimer. Interacts with FtsZ.

The protein localises to the cytoplasm. In terms of biological role, activator of cell division through the inhibition of FtsZ GTPase activity, therefore promoting FtsZ assembly into bundles of protofilaments necessary for the formation of the division Z ring. It is recruited early at mid-cell but it is not essential for cell division. This chain is Cell division protein ZapA, found in Shigella boydii serotype 18 (strain CDC 3083-94 / BS512).